Consider the following 113-residue polypeptide: MMSRANSRFSCQRTWLLSVVVLAALWSFGVHRAAARVINDECPNLIGNRDLYKKVEWICEDCSNIFRKTGMASLCRRNCFFNEDFVWCVHATERSEELRDLEEWVGILGAGRD.

Residues 1-35 (MMSRANSRFSCQRTWLLSVVVLAALWSFGVHRAAA) form the signal peptide. Intrachain disulfides connect Cys42/Cys79, Cys59/Cys75, and Cys62/Cys88.

Belongs to the arthropod CHH/MIH/GIH/VIH hormone family.

The protein resides in the secreted. Inhibits Y-organs where molting hormone (ecdysteroid) is secreted. A molting cycle is initiated when MIH secretion diminishes or stops. The protein is Molt-inhibiting hormone (MIH) of Carcinus maenas (Common shore crab).